The sequence spans 99 residues: Leydig cell tumor 10 kDa protein homolog (99 aa).

The tract at residues 1–37 (MAQGQRKFQARKPAKSKTAATASEKNRGPRKGGRVIA) is disordered. Positions 28–37 (GPRKGGRVIA) are enriched in basic residues.

The protein belongs to the UPF0390 family.

In terms of biological role, may have a potential role in hypercalcemia of malignancy. The sequence is that of Leydig cell tumor 10 kDa protein homolog from Pongo abelii (Sumatran orangutan).